Here is a 151-residue protein sequence, read N- to C-terminus: Large ribosomal subunit protein bL9 (151 aa).

This sequence belongs to the bacterial ribosomal protein bL9 family.

In terms of biological role, binds to the 23S rRNA. This chain is Large ribosomal subunit protein bL9, found in Rhodococcus erythropolis (strain PR4 / NBRC 100887).